The primary structure comprises 273 residues: Diaminopimelate epimerase (273 aa).

Residues Asn11 and Asn60 each coordinate substrate. The Proton donor role is filled by Cys69. Residues 70–71, Asn181, and 199–200 each bind substrate; these read GN and ER. The active-site Proton acceptor is the Cys209. A substrate-binding site is contributed by 210 to 211; it reads GT.

The protein belongs to the diaminopimelate epimerase family. In terms of assembly, homodimer.

It localises to the cytoplasm. The catalysed reaction is (2S,6S)-2,6-diaminopimelate = meso-2,6-diaminopimelate. Its pathway is amino-acid biosynthesis; L-lysine biosynthesis via DAP pathway; DL-2,6-diaminopimelate from LL-2,6-diaminopimelate: step 1/1. Functionally, catalyzes the stereoinversion of LL-2,6-diaminopimelate (L,L-DAP) to meso-diaminopimelate (meso-DAP), a precursor of L-lysine and an essential component of the bacterial peptidoglycan. This is Diaminopimelate epimerase from Helicobacter pylori (strain Shi470).